Consider the following 551-residue polypeptide: L-lactate permease (551 aa).

A run of 13 helical transmembrane segments spans residues 13–33, 37–57, 69–89, 131–151, 159–179, 194–214, 220–240, 244–264, 366–386, 405–425, 438–458, 494–514, and 530–550; these read NIWL…FALI, LKGY…ALLF, VVYG…AAVF, GAAG…GLGF, LCLI…PILV, MVGR…MAIM, IKET…AQYL, FIGP…CLTL, FDWF…SIVW, LALP…SNYS, TGHA…FLTG, VTGK…VGLV, and IFTC…TWMI.

Belongs to the lactate permease family.

The protein localises to the cell inner membrane. It catalyses the reaction (S)-lactate(in) + H(+)(in) = (S)-lactate(out) + H(+)(out). It carries out the reaction (R)-lactate(in) + H(+)(in) = (R)-lactate(out) + H(+)(out). The catalysed reaction is glycolate(in) + H(+)(in) = glycolate(out) + H(+)(out). Its activity is regulated as follows. Inhibited by the proton ionophore carbonyl cyanide m-chlorophenylhydrazone (CCCP). Functionally, uptake of L-lactate across the membrane. Can also transport D-lactate and glycolate. Seems to be driven by a proton motive force. The protein is L-lactate permease of Escherichia coli (strain K12).